Reading from the N-terminus, the 303-residue chain is 2-dehydropantoate 2-reductase (303 aa).

NADP(+) contacts are provided by residues 7-12 (GPGSLG), Lys78, Asn103, and Ala129. Lys185 acts as the Proton donor in catalysis. Substrate-binding positions include Lys185, Asn189, Asn193, Asn203, and 252–255 (NESS). NADP(+) is bound at residue Glu267.

It belongs to the ketopantoate reductase family.

The protein localises to the cytoplasm. It catalyses the reaction (R)-pantoate + NAD(+) = 2-dehydropantoate + NADH + H(+). The enzyme catalyses (R)-pantoate + NADP(+) = 2-dehydropantoate + NADPH + H(+). Its pathway is cofactor biosynthesis; coenzyme A biosynthesis. Functionally, catalyzes the NAD(P)H-dependent reduction of ketopantoate into pantoic acid. This chain is 2-dehydropantoate 2-reductase, found in Halobacterium salinarum (strain ATCC 700922 / JCM 11081 / NRC-1) (Halobacterium halobium).